Consider the following 435-residue polypeptide: 3-phosphoshikimate 1-carboxyvinyltransferase (435 aa).

Positions 15, 16, and 20 each coordinate 3-phosphoshikimate. Residue K15 participates in phosphoenolpyruvate binding. G96 and R124 together coordinate phosphoenolpyruvate. Residues S169, Q171, S195, D319, and K346 each coordinate 3-phosphoshikimate. Residue Q171 coordinates phosphoenolpyruvate. The active-site Proton acceptor is the D319. Residues R350 and R395 each coordinate phosphoenolpyruvate.

The protein belongs to the EPSP synthase family. In terms of assembly, monomer.

The protein resides in the cytoplasm. The enzyme catalyses 3-phosphoshikimate + phosphoenolpyruvate = 5-O-(1-carboxyvinyl)-3-phosphoshikimate + phosphate. It participates in metabolic intermediate biosynthesis; chorismate biosynthesis; chorismate from D-erythrose 4-phosphate and phosphoenolpyruvate: step 6/7. Its function is as follows. Catalyzes the transfer of the enolpyruvyl moiety of phosphoenolpyruvate (PEP) to the 5-hydroxyl of shikimate-3-phosphate (S3P) to produce enolpyruvyl shikimate-3-phosphate and inorganic phosphate. In Chlorobium phaeobacteroides (strain BS1), this protein is 3-phosphoshikimate 1-carboxyvinyltransferase.